Consider the following 362-residue polypeptide: Chorismate synthase (362 aa).

Residue Arg46 participates in NADP(+) binding. Residues 122 to 124 (RSS), 238 to 239 (NA), Gly278, 293 to 297 (KPTPS), and Arg319 each bind FMN.

This sequence belongs to the chorismate synthase family. In terms of assembly, homotetramer. It depends on FMNH2 as a cofactor.

It carries out the reaction 5-O-(1-carboxyvinyl)-3-phosphoshikimate = chorismate + phosphate. Its pathway is metabolic intermediate biosynthesis; chorismate biosynthesis; chorismate from D-erythrose 4-phosphate and phosphoenolpyruvate: step 7/7. Its function is as follows. Catalyzes the anti-1,4-elimination of the C-3 phosphate and the C-6 proR hydrogen from 5-enolpyruvylshikimate-3-phosphate (EPSP) to yield chorismate, which is the branch point compound that serves as the starting substrate for the three terminal pathways of aromatic amino acid biosynthesis. This reaction introduces a second double bond into the aromatic ring system. The polypeptide is Chorismate synthase (Campylobacter jejuni subsp. doylei (strain ATCC BAA-1458 / RM4099 / 269.97)).